We begin with the raw amino-acid sequence, 114 residues long: Holo-[acyl-carrier-protein] synthase (114 aa).

The Mg(2+) site is built by D5 and E50.

This sequence belongs to the P-Pant transferase superfamily. AcpS family. Mg(2+) is required as a cofactor.

The protein resides in the cytoplasm. It carries out the reaction apo-[ACP] + CoA = holo-[ACP] + adenosine 3',5'-bisphosphate + H(+). In terms of biological role, transfers the 4'-phosphopantetheine moiety from coenzyme A to a Ser of acyl-carrier-protein. The chain is Holo-[acyl-carrier-protein] synthase from Campylobacter curvus (strain 525.92).